The following is a 405-amino-acid chain: PP2A regulatory subunit TAP46 (405 aa).

Disordered regions lie at residues 159 to 189 (ERRGRSTKASALSTPVESGEDDIPDDDSEEE) and 352 to 405 (ATTS…TPCG). The span at 165–174 (TKASALSTPV) shows a compositional bias: polar residues. 2 stretches are compositionally biased toward acidic residues: residues 176–189 (SGEDDIPDDDSEEE) and 367–377 (EDEEDDDEDEE). Residues 378 to 393 (AVMKARAFDDWKDDNP) are compositionally biased toward basic and acidic residues.

Belongs to the IGBP1/TAP42 family. As to quaternary structure, interacts with the 36 kDa catalytic subunit (subunit C) of PP2A. Interacts with PP2A1 and PP2A2. Interacts with PP2A3, PPX1 and FYPP1. Interacts with FYPP3 and ABI5. Interacts with ATPK1/S6K1 and ATPK2/S6K2. Interacts with TIP41L. Post-translationally, phosphorylated by TOR kinase in vitro. In terms of tissue distribution, ubiquitous. Highly expressed in seed, and particularly in the embryo.

Functionally, involved in the positive regulation of the TOR signaling pathway. Acts as a negative regulator of PP2A catalytic activity. Plays a positive role in the ABA-regulated inhibition of germination, probably throught its interaction with ABI5. This Arabidopsis thaliana (Mouse-ear cress) protein is PP2A regulatory subunit TAP46.